A 450-amino-acid chain; its full sequence is Hyaluronidase-1 (450 aa).

Positions 1 to 35 (MRPFSLEVSLHLPWAMAAHLLPVCTLFLNLLSMTQ) are cleaved as a signal peptide. 2 cysteine pairs are disulfide-bonded: C58-C348 and C222-C236. N85 carries N-linked (GlcNAc...) asparagine glycosylation. The active-site Proton donor is E146. 2 N-linked (GlcNAc...) asparagine glycosylation sites follow: N231 and N365. Disulfide bonds link C373–C384, C378–C433, and C435–C444. A glycan (N-linked (GlcNAc...) asparagine) is linked at N398. The region spanning 433-444 (CRCYRGWRGTRC) is the EGF-like domain.

It belongs to the glycosyl hydrolase 56 family.

It localises to the secreted. The protein resides in the lysosome. The enzyme catalyses Random hydrolysis of (1-&gt;4)-linkages between N-acetyl-beta-D-glucosamine and D-glucuronate residues in hyaluronate.. May have a role in promoting tumor progression. May block the TGFB1-enhanced cell growth. The protein is Hyaluronidase-1 (HYAL1) of Bos taurus (Bovine).